The following is a 94-amino-acid chain: Elongation factor 1-beta (94 aa).

It belongs to the EF-1-beta/EF-1-delta family.

In terms of biological role, promotes the exchange of GDP for GTP in EF-1-alpha/GDP, thus allowing the regeneration of EF-1-alpha/GTP that could then be used to form the ternary complex EF-1-alpha/GTP/AAtRNA. The chain is Elongation factor 1-beta from Ignicoccus hospitalis (strain KIN4/I / DSM 18386 / JCM 14125).